We begin with the raw amino-acid sequence, 413 residues long: Peptidase T (413 aa).

His81 contributes to the Zn(2+) binding site. Asp83 is an active-site residue. Asp143 is a Zn(2+) binding site. The Proton acceptor role is filled by Glu178. Positions 179, 201, and 383 each coordinate Zn(2+).

Belongs to the peptidase M20B family. In terms of assembly, homodimer. Zn(2+) serves as cofactor.

It is found in the cytoplasm. It carries out the reaction Release of the N-terminal residue from a tripeptide.. Its activity is regulated as follows. Inhibited by EDTA, by the reducing agents dithiothreitol and 13-mercaptoethanol, and by the divalent cation Cu(2+). Its function is as follows. Cleaves the N-terminal amino acid of tripeptides. Has a broad specificity for tripeptides with no clear preference for a particular tripeptide. Tripeptides with proline in the second position are an exception and are not hydrolyzed. Does not hydrolyze dipeptides, tetrapeptides, or oligopeptides. This Lactococcus lactis subsp. cremoris (Streptococcus cremoris) protein is Peptidase T (pepT).